The following is a 432-amino-acid chain: Adenylosuccinate synthetase (432 aa).

GTP contacts are provided by residues 13 to 19 and 41 to 43; these read GDEGKGK and GHT. The Proton acceptor role is filled by Asp14. Positions 14 and 41 each coordinate Mg(2+). IMP contacts are provided by residues 14 to 17, 39 to 42, Thr130, Arg144, Gln225, Thr240, and Arg304; these read DEGK and NAGH. Catalysis depends on His42, which acts as the Proton donor. 300–306 serves as a coordination point for substrate; that stretch reads ATTGRKR. Residues Arg306, 332-334, and 415-417 each bind GTP; these read KLD and STG.

Belongs to the adenylosuccinate synthetase family. As to quaternary structure, homodimer. Mg(2+) is required as a cofactor.

It localises to the cytoplasm. It catalyses the reaction IMP + L-aspartate + GTP = N(6)-(1,2-dicarboxyethyl)-AMP + GDP + phosphate + 2 H(+). It participates in purine metabolism; AMP biosynthesis via de novo pathway; AMP from IMP: step 1/2. In terms of biological role, plays an important role in the de novo pathway of purine nucleotide biosynthesis. Catalyzes the first committed step in the biosynthesis of AMP from IMP. The polypeptide is Adenylosuccinate synthetase (Pseudoalteromonas atlantica (strain T6c / ATCC BAA-1087)).